A 199-amino-acid chain; its full sequence is Peroxiredoxin-1 (199 aa).

The residue at position 2 (Ser2) is an N-acetylserine. Positions 6-165 constitute a Thioredoxin domain; sequence AKIGHPAPNF…TLRLVQAFQF (160 aa). Lys7 is modified (N6-acetyllysine; alternate). Residue Lys7 forms a Glycyl lysine isopeptide (Lys-Gly) (interchain with G-Cter in SUMO2); alternate linkage. Residues Lys16 and Lys27 each carry the N6-acetyllysine modification. Ser32 is modified (phosphoserine). At Lys35 the chain carries N6-acetyllysine; alternate. Lys35 is subject to N6-succinyllysine; alternate. Cys52 serves as the catalytic Cysteine sulfenic acid (-SOH) intermediate. Position 90 is a phosphothreonine (Thr90). Lys120 is covalently cross-linked (Glycyl lysine isopeptide (Lys-Gly) (interchain with G-Cter in SUMO2)). Lys136 carries the post-translational modification N6-acetyllysine. Positions 176 to 199 are disordered; that stretch reads GWKPGSDTIKPDVQKSKEYFSKQK. A compositionally biased stretch (basic and acidic residues) spans 184-199; it reads IKPDVQKSKEYFSKQK. Lys185 is covalently cross-linked (Glycyl lysine isopeptide (Lys-Gly) (interchain with G-Cter in SUMO1)). N6-acetyllysine is present on Lys197.

This sequence belongs to the peroxiredoxin family. AhpC/Prx1 subfamily. Homodimer; disulfide-linked, upon oxidation. 5 homodimers assemble to form a ring-like decamer. Interacts with GDPD5; forms a mixed-disulfide with GDPD5. Interacts with SESN1 and SESN2. Interacts with FAM107A. In terms of processing, phosphorylated on Thr-90 during the M-phase, which leads to a decrease in enzymatic activity. Post-translationally, acetylation increases reducing activity and resistance to superoxidation. Deacetylated by HDAC6 which decreases reducing activity. As to expression, detected in heart and skeletal muscle (at protein level).

The protein localises to the cytoplasm. It catalyses the reaction a hydroperoxide + [thioredoxin]-dithiol = an alcohol + [thioredoxin]-disulfide + H2O. Its function is as follows. Thiol-specific peroxidase that catalyzes the reduction of hydrogen peroxide and organic hydroperoxides to water and alcohols, respectively. Plays a role in cell protection against oxidative stress by detoxifying peroxides and as sensor of hydrogen peroxide-mediated signaling events. Might participate in the signaling cascades of growth factors and tumor necrosis factor-alpha by regulating the intracellular concentrations of H(2)O(2). Reduces an intramolecular disulfide bond in GDPD5 that gates the ability to GDPD5 to drive postmitotic motor neuron differentiation. In Myotis lucifugus (Little brown bat), this protein is Peroxiredoxin-1 (PRDX1).